The primary structure comprises 342 residues: MATAKKITIHDVALAAGVSVSTVSLVLSGKGRISTATGERVNAAIEELGFVRNRQASALRGGQSGVIGLIVRDLSAPFYAELTAGLTEALEAQGRMVFLLHGGKDGEQLAQRFSLLLNQGVDGVVIAGAAGSSDDLRRMAEEKAIPVIFASRASYLDDVDTVRPDNMQAAQLLTEHLIRNGHQRIAWLGGQSSSLTRAERVGGYCATLLKFGLPFHSDWVLECTSSQKQAAEAITALLRHNPTISAVVCYNETIAMGAWFGLLKAGRQSGESGVDRYFEQQVSLAAFTDATPTTLDDIPVTWASTPARELGITLADRMMQKITHEETHSRNLIIPARLIAAK.

One can recognise an HTH lacI-type domain in the interval 7–61 (ITIHDVALAAGVSVSTVSLVLSGKGRISTATGERVNAAIEELGFVRNRQASALRG). Residues 9–28 (IHDVALAAGVSVSTVSLVLS) constitute a DNA-binding region (H-T-H motif).

Its function is as follows. Repressor for the malX and malY genes. Also regulates its own expression. Binds maltose as an inducer. This is Maltose regulon regulatory protein MalI (malI) from Escherichia coli (strain K12).